Reading from the N-terminus, the 242-residue chain is Ribosomal RNA small subunit methyltransferase G (242 aa).

S-adenosyl-L-methionine-binding positions include G78, L83, 130–131, and R151; that span reads AE.

This sequence belongs to the methyltransferase superfamily. RNA methyltransferase RsmG family.

It localises to the cytoplasm. In terms of biological role, specifically methylates the N7 position of guanine in position 518 of 16S rRNA. The polypeptide is Ribosomal RNA small subunit methyltransferase G (Salinispora arenicola (strain CNS-205)).